The primary structure comprises 323 residues: tRNA dimethylallyltransferase (323 aa).

12–19 (GPTAAGKT) serves as a coordination point for ATP. 14-19 (TAAGKT) is a substrate binding site. Interaction with substrate tRNA stretches follow at residues 37–40 (DSAL) and 161–165 (QRLSR).

The protein belongs to the IPP transferase family. In terms of assembly, monomer. Mg(2+) serves as cofactor.

The enzyme catalyses adenosine(37) in tRNA + dimethylallyl diphosphate = N(6)-dimethylallyladenosine(37) in tRNA + diphosphate. Functionally, catalyzes the transfer of a dimethylallyl group onto the adenine at position 37 in tRNAs that read codons beginning with uridine, leading to the formation of N6-(dimethylallyl)adenosine (i(6)A). The polypeptide is tRNA dimethylallyltransferase (Pseudomonas fluorescens (strain SBW25)).